The sequence spans 177 residues: Translation initiation factor IF-3 (177 aa).

Belongs to the IF-3 family. Monomer.

It is found in the cytoplasm. IF-3 binds to the 30S ribosomal subunit and shifts the equilibrium between 70S ribosomes and their 50S and 30S subunits in favor of the free subunits, thus enhancing the availability of 30S subunits on which protein synthesis initiation begins. The protein is Translation initiation factor IF-3 of Acaryochloris marina (strain MBIC 11017).